The following is a 314-amino-acid chain: DNA-directed RNA polymerase subunit alpha (314 aa).

An alpha N-terminal domain (alpha-NTD) region spans residues 1 to 228 (MIEIEKPRIE…EHLNIFVGLT (228 aa)). Residues 245–314 (KEKVLEMSIE…DLGLGLRKED (70 aa)) are alpha C-terminal domain (alpha-CTD).

It belongs to the RNA polymerase alpha chain family. As to quaternary structure, homodimer. The RNAP catalytic core consists of 2 alpha, 1 beta, 1 beta' and 1 omega subunit. When a sigma factor is associated with the core the holoenzyme is formed, which can initiate transcription.

It carries out the reaction RNA(n) + a ribonucleoside 5'-triphosphate = RNA(n+1) + diphosphate. Its function is as follows. DNA-dependent RNA polymerase catalyzes the transcription of DNA into RNA using the four ribonucleoside triphosphates as substrates. This is DNA-directed RNA polymerase subunit alpha from Staphylococcus aureus (strain bovine RF122 / ET3-1).